Here is a 353-residue protein sequence, read N- to C-terminus: 4-hydroxy-2-oxovalerate aldolase 1 (353 aa).

Residues 14-266 (VRMTDTSLRD…KTGIDFFDIA (253 aa)) enclose the Pyruvate carboxyltransferase domain. 22-23 (RD) is a binding site for substrate. Asp23 lines the Mn(2+) pocket. His26 serves as the catalytic Proton acceptor. Positions 176 and 205 each coordinate substrate. The Mn(2+) site is built by His205 and His207. Substrate is bound at residue Tyr296.

This sequence belongs to the 4-hydroxy-2-oxovalerate aldolase family.

It carries out the reaction (S)-4-hydroxy-2-oxopentanoate = acetaldehyde + pyruvate. The protein is 4-hydroxy-2-oxovalerate aldolase 1 of Mycobacterium sp. (strain KMS).